The following is a 1382-amino-acid chain: Hepatocyte growth factor receptor (1382 aa).

The N-terminal stretch at 1–24 (MKPPTVHIPGIVVLLFTLVQRSSE) is a signal peptide. Residues 25 to 933 (ECREALRRSG…VIVLPDQNFT (909 aa)) are Extracellular-facing. The region spanning 27–516 (REALRRSGTD…TGKKITKIPL (490 aa)) is the Sema domain. N-linked (GlcNAc...) asparagine glycosylation is found at Asn38, Asn49, and Asn99. Cystine bridges form between Cys94–Cys100, Cys97–Cys160, Cys133–Cys141, and Cys173–Cys176. Asn203 and Asn359 each carry an N-linked (GlcNAc...) asparagine glycan. 2 cysteine pairs are disulfide-bonded: Cys299–Cys364 and Cys386–Cys398. Residues Asn400, Asn406, Asn450, and Asn495 are each glycosylated (N-linked (GlcNAc...) asparagine). Cystine bridges form between Cys521/Cys539, Cys527/Cys562, Cys530/Cys546, and Cys542/Cys552. IPT/TIG domains follow at residues 564–656 (PTIF…FSYV), 658–740 (PKIT…FIYK), and 743–837 (PVIH…LIYV). The O-linked (Man) threonine glycan is linked to Thr583. N-linked (GlcNAc...) asparagine glycosylation is found at Asn608, Asn616, and Asn636. O-linked (Man) threonine glycans are attached at residues Thr677 and Thr762. Asn769, Asn786, Asn880, and Asn931 each carry an N-linked (GlcNAc...) asparagine glycan. A helical membrane pass occupies residues 934–956 (GLIAGVASISVLLLLFLGLFLWM). Over 957–1382 (KKKKQIKDLG…QDAPDRVVDT (426 aa)) the chain is Cytoplasmic. The residue at position 967 (Ser967) is a Phosphoserine. Thr978 carries the phosphothreonine modification. 3 positions are modified to phosphoserine: Ser991, Ser998, and Ser1001. Tyr1004 carries the phosphotyrosine modification. Positions 1079 to 1346 (VHFTEIIGRG…KIAVIFSTFI (268 aa)) constitute a Protein kinase domain. ATP-binding positions include 1085-1093 (IGRGHFGCV) and Lys1111. Asp1205 functions as the Proton acceptor in the catalytic mechanism. Positions 1213–1382 (LDEKFTVKVA…QDAPDRVVDT (170 aa)) are interaction with RANBP9. Tyr1231 carries the phosphotyrosine modification. Phosphotyrosine; by autocatalysis occurs at positions 1235 and 1236. At Thr1290 the chain carries Phosphothreonine. The interval 1321 to 1360 (WHPNAEMRPSFSELVSKIAVIFSTFIGEHYVHVNATYVNV) is interaction with MUC20. A phosphotyrosine; by autocatalysis mark is found at Tyr1350 and Tyr1357. Tyr1366 carries the phosphotyrosine modification.

Belongs to the protein kinase superfamily. Tyr protein kinase family. As to quaternary structure, heterodimer made of an alpha chain (50 kDa) and a beta chain (145 kDa) which are disulfide linked. Binds PLXNB1. Interacts when phosphorylated with downstream effectors including STAT3, PIK3R1, SRC, PCLG1, GRB2 and GAB1. Interacts with SPSB1, SPSB2 and SPSB4. Interacts with INPP5D/SHIP1. When phosphorylated at Tyr-1357, interacts with INPPL1/SHIP2. Interacts with RANBP9 and RANBP10, as well as SPSB1, SPSB2, SPSB3 and SPSB4. SPSB1 binding occurs in the presence and in the absence of HGF, however HGF treatment has a positive effect on this interaction. Interacts with MUC20; prevents interaction with GRB2 and suppresses hepatocyte growth factor-induced cell proliferation. Interacts with GRB10. Interacts with PTPN1 and PTPN2. Interacts with HSP90AA1 and HSP90AB1; the interaction suppresses MET kinase activity. Interacts with tensin TNS3. Interacts (when phosphorylated) with tensin TNS4 (via SH2 domain); the interaction increases MET protein stability by inhibiting MET endocytosis and subsequent lysosomal degradation. Autophosphorylated in response to ligand binding on Tyr-1235 and Tyr-1236 in the kinase domain leading to further phosphorylation of Tyr-1350 and Tyr-1357 in the C-terminal multifunctional docking site. Dephosphorylated by PTPRJ at Tyr-1350 and Tyr-1366. Dephosphorylated by PTPN1 and PTPN2. In terms of processing, ubiquitinated. Ubiquitination by CBL regulates the receptor stability and activity through proteasomal degradation. Post-translationally, O-mannosylation of IPT/TIG domains by TMEM260 is required for protein maturation. O-mannosylated residues are composed of single mannose glycans that are not elongated or modified.

The protein localises to the membrane. It carries out the reaction L-tyrosyl-[protein] + ATP = O-phospho-L-tyrosyl-[protein] + ADP + H(+). In its inactive state, the C-terminal tail interacts with the catalytic domain and inhibits the kinase activity. Upon ligand binding, the C-terminal tail is displaced and becomes phosphorylated, thus increasing the kinase activity. Functionally, receptor tyrosine kinase that transduces signals from the extracellular matrix into the cytoplasm by binding to hepatocyte growth factor/HGF ligand. Regulates many physiological processes including proliferation, scattering, morphogenesis and survival. Ligand binding at the cell surface induces autophosphorylation of MET on its intracellular domain that provides docking sites for downstream signaling molecules. Following activation by ligand, interacts with the PI3-kinase subunit PIK3R1, PLCG1, SRC, GRB2, STAT3 or the adapter GAB1. Recruitment of these downstream effectors by MET leads to the activation of several signaling cascades including the RAS-ERK, PI3 kinase-AKT, or PLCgamma-PKC. The RAS-ERK activation is associated with the morphogenetic effects while PI3K/AKT coordinates prosurvival effects. During embryonic development, MET signaling plays a role in gastrulation, development and migration of muscles and neuronal precursors, angiogenesis and kidney formation. In adults, participates in wound healing as well as organ regeneration and tissue remodeling. Also promotes differentiation and proliferation of hematopoietic cells. In Ornithorhynchus anatinus (Duckbill platypus), this protein is Hepatocyte growth factor receptor (MET).